The following is a 369-amino-acid chain: MEFEVKKTFGKARLGVMKLHHGAVETPVFMPVGTNASVKLLTPRDLEEAGAEIILSNTFHLMLKPGVEIIKLHRGLHNFMGWKRPILTDSGGFQVFSLPKIRIDDEGVVFRSPIDGSKVFLNPEISMEVQIALGSDICMVFDHCPVPDADYEEVKEATERTYRWALRSKKAFKTENQALFGIVQGGIYPDLRRESALQLTSIGFDGYAIGGLSIGEERSLTLEMTEVTVEFLPEDKPRYFMGGGSPELILELVDRGVDMFDSVFPTRIARHGTALTWNGKLNLKASYNKRSLEPVDERCGCYTCKNFTRSYIHHLFDRGEVLGQILLTIHNINFMISLMKEVRRSIESGTFKELKSKVVEVYSSGGVNV.

The active-site Proton acceptor is the aspartate 89. Substrate is bound by residues 89-93 (DSGGF), aspartate 142, glutamine 184, and glycine 211. The interval 242–248 (GGGSPEL) is RNA binding. Aspartate 261 acts as the Nucleophile in catalysis. The segment at 266–270 (TRIAR) is RNA binding; important for wobble base 34 recognition. Cysteine 299, cysteine 301, cysteine 304, and histidine 330 together coordinate Zn(2+).

Belongs to the queuine tRNA-ribosyltransferase family. As to quaternary structure, homodimer. Within each dimer, one monomer is responsible for RNA recognition and catalysis, while the other monomer binds to the replacement base PreQ1. It depends on Zn(2+) as a cofactor.

It carries out the reaction 7-aminomethyl-7-carbaguanine + guanosine(34) in tRNA = 7-aminomethyl-7-carbaguanosine(34) in tRNA + guanine. Its pathway is tRNA modification; tRNA-queuosine biosynthesis. Its function is as follows. Catalyzes the base-exchange of a guanine (G) residue with the queuine precursor 7-aminomethyl-7-deazaguanine (PreQ1) at position 34 (anticodon wobble position) in tRNAs with GU(N) anticodons (tRNA-Asp, -Asn, -His and -Tyr). Catalysis occurs through a double-displacement mechanism. The nucleophile active site attacks the C1' of nucleotide 34 to detach the guanine base from the RNA, forming a covalent enzyme-RNA intermediate. The proton acceptor active site deprotonates the incoming PreQ1, allowing a nucleophilic attack on the C1' of the ribose to form the product. After dissociation, two additional enzymatic reactions on the tRNA convert PreQ1 to queuine (Q), resulting in the hypermodified nucleoside queuosine (7-(((4,5-cis-dihydroxy-2-cyclopenten-1-yl)amino)methyl)-7-deazaguanosine). This chain is Queuine tRNA-ribosyltransferase, found in Thermotoga maritima (strain ATCC 43589 / DSM 3109 / JCM 10099 / NBRC 100826 / MSB8).